The primary structure comprises 328 residues: uncharacterized protein (328 aa).

Residue Ser170 is modified to Phosphoserine.

It is found in the cytoplasm. Its subcellular location is the nucleus. This is an uncharacterized protein from Schizosaccharomyces pombe (strain 972 / ATCC 24843) (Fission yeast).